We begin with the raw amino-acid sequence, 217 residues long: Probable disulfide bond formation protein D (217 aa).

An N-terminal signal peptide occupies residues 1 to 28 (MKSSNKLMALGIVFSIAVLIVIGTIVYS). Cys-66 and Cys-69 are oxidised to a cystine.

Belongs to the thioredoxin family. DsbA subfamily.

Its function is as follows. May be required for disulfide bond formation in some proteins. This chain is Probable disulfide bond formation protein D (bdbD), found in Bacillus anthracis.